The following is a 184-amino-acid chain: Peptidoglycan-recognition protein SC2 (184 aa).

The signal sequence occupies residues 1–20 (MANKALILLAVLFCAQAVLG). Residues 45-169 (SYAVIHHTAG…RQVGSTECPG (125 aa)) enclose the N-acetylmuramoyl-L-alanine amidase domain. H50 is a Zn(2+) binding site. Residues C57 and C63 are joined by a disulfide bond. Residues H159 and C167 each coordinate Zn(2+).

Belongs to the N-acetylmuramoyl-L-alanine amidase 2 family. The cofactor is Zn(2+). As to expression, constitutively expressed at high level in gut, in addition to the induced expression in fat body.

The protein resides in the secreted. The enzyme catalyses Hydrolyzes the link between N-acetylmuramoyl residues and L-amino acid residues in certain cell-wall glycopeptides.. In terms of biological role, N-acetylmuramyl-L-alanine amidase involved in innate immunity by degrading bacterial peptidoglycans (PGN). Probably plays a scavenger role by digesting biologically active PGN into biologically inactive fragments. Has no direct bacteriolytic activity. This chain is Peptidoglycan-recognition protein SC2 (PGRP-SC2), found in Drosophila melanogaster (Fruit fly).